The following is a 150-amino-acid chain: D-aminoacyl-tRNA deacylase (150 aa).

Residues 138–139 (GP) carry the Gly-cisPro motif, important for rejection of L-amino acids motif.

It belongs to the DTD family. In terms of assembly, homodimer.

It localises to the cytoplasm. It catalyses the reaction glycyl-tRNA(Ala) + H2O = tRNA(Ala) + glycine + H(+). It carries out the reaction a D-aminoacyl-tRNA + H2O = a tRNA + a D-alpha-amino acid + H(+). In terms of biological role, an aminoacyl-tRNA editing enzyme that deacylates mischarged D-aminoacyl-tRNAs. Also deacylates mischarged glycyl-tRNA(Ala), protecting cells against glycine mischarging by AlaRS. Acts via tRNA-based rather than protein-based catalysis; rejects L-amino acids rather than detecting D-amino acids in the active site. By recycling D-aminoacyl-tRNA to D-amino acids and free tRNA molecules, this enzyme counteracts the toxicity associated with the formation of D-aminoacyl-tRNA entities in vivo and helps enforce protein L-homochirality. In Chlorobium phaeobacteroides (strain DSM 266 / SMG 266 / 2430), this protein is D-aminoacyl-tRNA deacylase.